The chain runs to 196 residues: Recombination protein RecR (196 aa).

The segment at 56–71 adopts a C4-type zinc-finger fold; that stretch reads CPVCGGLDSQQPCMIC. The Toprim domain maps to 78 to 172; it reads PLICVVETVA…SVTRLAQGVP (95 aa).

The protein belongs to the RecR family.

Its function is as follows. May play a role in DNA repair. It seems to be involved in an RecBC-independent recombinational process of DNA repair. It may act with RecF and RecO. In Acidiphilium cryptum (strain JF-5), this protein is Recombination protein RecR.